Consider the following 398-residue polypeptide: Digeranylgeranylglycerophospholipid reductase (398 aa).

10 residues coordinate FAD: Ala-15, Glu-34, Cys-45, Ala-46, Gly-48, Arg-99, Ala-123, Asp-280, Gly-292, and Ile-293. Val-372 is an a 2,3-bis-O-(geranylgeranyl)-sn-glycerol 1-phospholipid binding site.

The protein belongs to the geranylgeranyl reductase family. DGGGPL reductase subfamily. FAD serves as cofactor.

The enzyme catalyses a 2,3-bis-O-phytanyl-sn-glycerol 1-phospholipid + 8 oxidized 2[4Fe-4S]-[ferredoxin] = a 2,3-bis-O-(geranylgeranyl)-sn-glycerol 1-phospholipid + 8 reduced 2[4Fe-4S]-[ferredoxin] + 16 H(+). It carries out the reaction 2,3-bis-O-(phytanyl)-sn-glycerol 1-phosphate + 8 oxidized 2[4Fe-4S]-[ferredoxin] = 2,3-bis-O-(geranylgeranyl)-sn-glycerol 1-phosphate + 8 reduced 2[4Fe-4S]-[ferredoxin] + 16 H(+). It catalyses the reaction a 2,3-bis-O-phytanyl-sn-glycerol 1-phospholipid + 8 A = a 2,3-bis-O-(geranylgeranyl)-sn-glycerol 1-phospholipid + 8 AH2. The catalysed reaction is CDP-2,3-bis-O-(geranylgeranyl)-sn-glycerol + 8 AH2 = CDP-2,3-bis-O-(phytanyl)-sn-glycerol + 8 A. The enzyme catalyses archaetidylserine + 8 AH2 = 2,3-bis-O-phytanyl-sn-glycero-3-phospho-L-serine + 8 A. It functions in the pathway membrane lipid metabolism; glycerophospholipid metabolism. Is involved in the reduction of 2,3-digeranylgeranylglycerophospholipids (unsaturated archaeols) into 2,3-diphytanylglycerophospholipids (saturated archaeols) in the biosynthesis of archaeal membrane lipids. Catalyzes the formation of archaetidic acid (2,3-di-O-phytanyl-sn-glyceryl phosphate) from 2,3-di-O-geranylgeranylglyceryl phosphate (DGGGP) via the hydrogenation of each double bond of the isoprenoid chains. Is also probably able to reduce double bonds of geranyl groups in CDP-2,3-bis-O-(geranylgeranyl)-sn-glycerol and archaetidylserine, thus acting at various stages in the biosynthesis of archaeal membrane lipids. This chain is Digeranylgeranylglycerophospholipid reductase, found in Methanoculleus marisnigri (strain ATCC 35101 / DSM 1498 / JR1).